The chain runs to 170 residues: MQVDEQRLRFRDAMASLAAAVNIVTTAGHAGRCGITATAVCSVTDTPPSVMVCINANSAMNPVFQGNGRLCINVLNHEQELMARHFVGMTGMAMEERFHQPCWQNGPLGQPVLNGALASLEGEISEVQTIGTHLVYLVAIKNIILSQEGHGLIYFKRRFHPVRLEMEAPV.

The protein belongs to the non-flavoprotein flavin reductase family. HpaC subfamily. Homodimer. 4-HPA 3-monooxygenase consists of a reductase component HpaC and an oxygenase component HpaB.

It catalyses the reaction a reduced flavin + NAD(+) = an oxidized flavin + NADH + 2 H(+). The protein operates within aromatic compound metabolism; 4-hydroxyphenylacetate degradation; pyruvate and succinate semialdehyde from 4-hydroxyphenylacetate: step 1/7. Its function is as follows. Catalyzes the reduction of free flavins (FMN, FAD and riboflavin) by NADH. Subsequently, the reduced flavins diffuse to the large HpaB component or to other electron acceptors such as cytochrome c and Fe(3+) ion. The chain is 4-hydroxyphenylacetate 3-monooxygenase reductase component (hpaC) from Salmonella typhi.